The primary structure comprises 380 residues: Cytochrome b (380 aa).

The next 4 helical transmembrane spans lie at 34–54 (FGSLLGICLLTQIMTGLLLAT), 78–99 (WLIRNLHANGASFFFICIYLHI), 114–134 (WNTGIILLLTLMATAFVGYVL), and 179–199 (FFALHFLLPFLIAGLTLIHLT). Positions 84 and 98 each coordinate heme b. Residues H183 and H197 each contribute to the heme b site. Position 202 (H202) interacts with a ubiquinone. 4 helical membrane-spanning segments follow: residues 227-247 (LKDILGFMLMLLPLTTLALFS), 289-309 (LGGVLALAASVLILFLIPFLH), 321-341 (ISQLLFWTLVANLLILTWIGS), and 348-368 (FIIIGQLASLTYFLILLALFP).

Belongs to the cytochrome b family. The cytochrome bc1 complex contains 11 subunits: 3 respiratory subunits (MT-CYB, CYC1 and UQCRFS1), 2 core proteins (UQCRC1 and UQCRC2) and 6 low-molecular weight proteins (UQCRH/QCR6, UQCRB/QCR7, UQCRQ/QCR8, UQCR10/QCR9, UQCR11/QCR10 and a cleavage product of UQCRFS1). This cytochrome bc1 complex then forms a dimer. It depends on heme b as a cofactor.

The protein resides in the mitochondrion inner membrane. Functionally, component of the ubiquinol-cytochrome c reductase complex (complex III or cytochrome b-c1 complex) that is part of the mitochondrial respiratory chain. The b-c1 complex mediates electron transfer from ubiquinol to cytochrome c. Contributes to the generation of a proton gradient across the mitochondrial membrane that is then used for ATP synthesis. The chain is Cytochrome b (MT-CYB) from Buteo buteo (Eurasian buzzard).